The following is a 192-amino-acid chain: MTEYLLLLIGTVLVNNFVLVKFLGLCPFMGVSSKLASAIGMSMATTFVLTLASVLSFLTNEFLLQPFSLEYLRTMSFILVIAVVVQFTEMLVQKTSASLHRALGIYLPLITTNCAVLGVALLNINEDHNFIESAIYGFGAAVGFSMVLILFSAMRERLAAADVPLPFRGGAIAMITAGLMSLAFMGFAGLIK.

A run of 6 helical transmembrane segments spans residues 5–25 (LLLL…FLGL), 38–58 (AIGM…LSFL), 72–92 (LRTM…EMLV), 102–122 (ALGI…VALL), 134–154 (AIYG…FSAM), and 171–191 (AIAM…AGLI).

The protein belongs to the NqrDE/RnfAE family. As to quaternary structure, the complex is composed of six subunits: RnfA, RnfB, RnfC, RnfD, RnfE and RnfG.

The protein localises to the cell inner membrane. In terms of biological role, part of a membrane-bound complex that couples electron transfer with translocation of ions across the membrane. In Shewanella denitrificans (strain OS217 / ATCC BAA-1090 / DSM 15013), this protein is Ion-translocating oxidoreductase complex subunit A.